The sequence spans 242 residues: MGGRGMGISELKLPAAVKVHELADAKTLAATLAHDVAERLRAAIAAKGQACVVLSGGRSPVPFLEKLASEPLDWAKVTVSLADERWVPVEHADSNAGLLARHLLTGAAAKARFVGLYQQAENLDAAALKADQALTGLPPIDVLVLGMGDDGHTASLFPASPNLEAGLDLASTRRCLPLLAPSVPHQRLSMTRSLLASAAFIALSVQGPGKLATLRAALAGNDLTEMPIRAFLHDPLDIYWCP.

Belongs to the glucosamine/galactosamine-6-phosphate isomerase family. 6-phosphogluconolactonase subfamily.

The catalysed reaction is 6-phospho-D-glucono-1,5-lactone + H2O = 6-phospho-D-gluconate + H(+). The protein operates within carbohydrate degradation; pentose phosphate pathway; D-ribulose 5-phosphate from D-glucose 6-phosphate (oxidative stage): step 2/3. Its function is as follows. Hydrolysis of 6-phosphogluconolactone to 6-phosphogluconate. This chain is 6-phosphogluconolactonase (pgl), found in Pseudomonas putida (Arthrobacter siderocapsulatus).